Consider the following 628-residue polypeptide: (+)-alpha-pinene synthase, chloroplastic (628 aa).

The transit peptide at 1–48 (MALVSAVPLNSKLCLRRTLFGFSHELKAIHSTVPNLGMCRGGKSIAPS) directs the protein to the chloroplast. Mg(2+)-binding residues include Asp-379, Asp-383, and Asp-531. The DDXXD motif motif lies at 379-383 (DDIYD). Ser-539 provides a ligand contact to K(+).

Belongs to the terpene synthase family. Tpsd subfamily. Requires Mg(2+) as cofactor. The cofactor is Mn(2+). K(+) serves as cofactor.

It localises to the plastid. Its subcellular location is the chloroplast. It catalyses the reaction (2E)-geranyl diphosphate = (1R,5R)-alpha-pinene + diphosphate. It functions in the pathway terpene metabolism; oleoresin biosynthesis. Its function is as follows. Involved in defensive oleoresin formation in conifers in response to insect attack or other injury. Involved in monoterpene (C10) olefins biosynthesis. Produces mainly (+)-alpha-pinene (97%) with a small amount of (-)-alpha-pinene (3%). This Pinus taeda (Loblolly pine) protein is (+)-alpha-pinene synthase, chloroplastic (PT30).